Consider the following 203-residue polypeptide: CASP-like protein 1B1 (203 aa).

The Cytoplasmic segment spans residues 1 to 24; sequence MALVNAEKPEVGSSPSSLGPRNKS. A helical membrane pass occupies residues 25 to 45; it reads WVLLMLRFVAFLATAAATIVM. The Extracellular segment spans residues 46-76; it reads AANRETKTFVVATIGSTPIKATVTAKFQHTP. The helical transmembrane segment at 77-97 threads the bilayer; sequence AFVFFVIANGMGSIHNLVMIA. The Cytoplasmic portion of the chain corresponds to 98-114; the sequence is GDTFVRKFDYKGLRWVT. The helical transmembrane segment at 115-135 threads the bilayer; sequence VAILDMLTAALISGGVNAAVF. The Extracellular segment spans residues 136–165; that stretch reads MAELGKNGNSHAKWNKICDRFGSFCDHGGA. A helical transmembrane segment spans residues 166-186; it reads AIIASFIGLLLMLVISIISII. At 187 to 203 the chain is on the cytoplasmic side; sequence KLLKPKSPLVDSHVLAP.

The protein belongs to the Casparian strip membrane proteins (CASP) family. Homodimer and heterodimers.

It is found in the cell membrane. This chain is CASP-like protein 1B1, found in Ricinus communis (Castor bean).